Here is a 559-residue protein sequence, read N- to C-terminus: Beta-glucuronidase (559 aa).

An N-terminal signal peptide occupies residues 1–19 (MKRILGLIAYASVPTVINA). Asn53, Asn91, Asn99, and Asn143 each carry an N-linked (GlcNAc...) asparagine glycan. The active-site Proton donor is the Glu194. Asn203, Asn222, and Asn280 each carry an N-linked (GlcNAc...) asparagine glycan. The active-site Nucleophile is the Glu312. Residues Asn427, Asn440, Asn465, Asn491, and Asn520 are each glycosylated (N-linked (GlcNAc...) asparagine).

The protein belongs to the glycosyl hydrolase 79 family.

It localises to the secreted. It catalyses the reaction a beta-D-glucuronoside + H2O = D-glucuronate + an alcohol. Its function is as follows. Beta-glucuronidase that hydrolyzes beta-glucuronosyl and 4-O-methyl-beta-glucuronosyl residues of arabinogalactan-protein. Hydrolyzed heparan sulfate only very weakly. Has no activity on xylan from birchwood. Able to catalyze the transglycosylation of glucuronic acid (GlcA) residues from p-nitrophenyl-beta-glucuronic acid (PNP beta-GlcA) to various monosaccharide acceptors such as glucose, galactose and xylose. The protein is Beta-glucuronidase of Neurospora crassa (strain ATCC 24698 / 74-OR23-1A / CBS 708.71 / DSM 1257 / FGSC 987).